Consider the following 265-residue polypeptide: Small ribosomal subunit protein uS2 (265 aa).

This sequence belongs to the universal ribosomal protein uS2 family.

This chain is Small ribosomal subunit protein uS2, found in Microcystis aeruginosa (strain NIES-843 / IAM M-2473).